Here is a 221-residue protein sequence, read N- to C-terminus: Small ribosomal subunit protein uS5 (221 aa).

In terms of domain architecture, S5 DRBM spans 46–109 (IKDEVIDIKR…INAKLNIMEI (64 aa)).

This sequence belongs to the universal ribosomal protein uS5 family. As to quaternary structure, part of the 30S ribosomal subunit. Contacts protein S4.

Functionally, with S4 and S12 plays an important role in translational accuracy. The chain is Small ribosomal subunit protein uS5 from Thermoplasma volcanium (strain ATCC 51530 / DSM 4299 / JCM 9571 / NBRC 15438 / GSS1).